The primary structure comprises 671 residues: Condensin complex subunit 2 (671 aa).

Over residues 1–24 the composition is skewed to polar residues; sequence MDESLTPNPKQKPASTTTRIQAPT. 3 disordered regions span residues 1–33, 404–444, and 510–564; these read MDES…GSND, NSWA…KQAE, and RRKN…ISQP. The short motif at 406-415 is the Kleisin-gamma middle domain (GM domain) involved in chromosome-binding element; it reads WAGPDHWKYR. Over residues 536-556 the composition is skewed to acidic residues; the sequence is VYDDDDGPFDDNENDQSDAED.

Belongs to the CND2 (condensin subunit 2) family. As to quaternary structure, component of the condensin complex. In terms of tissue distribution, mostly expressed in flower buds and flowers, and, to a lower extent, in roots, stems, leaves and seedlings.

The protein resides in the cytoplasm. It localises to the chromosome. Regulatory subunit of the condensin complex, a complex required for conversion of interphase chromatin into mitotic-like condense chromosomes. The condensin complex probably introduces positive supercoils into relaxed DNA in the presence of type I topoisomerases and converts nicked DNA into positive knotted forms in the presence of type II topoisomerases. Essential protein. This chain is Condensin complex subunit 2 (CAPH), found in Arabidopsis thaliana (Mouse-ear cress).